The sequence spans 113 residues: Large ribosomal subunit protein uL22 (113 aa).

This sequence belongs to the universal ribosomal protein uL22 family. Part of the 50S ribosomal subunit.

Its function is as follows. This protein binds specifically to 23S rRNA; its binding is stimulated by other ribosomal proteins, e.g. L4, L17, and L20. It is important during the early stages of 50S assembly. It makes multiple contacts with different domains of the 23S rRNA in the assembled 50S subunit and ribosome. The globular domain of the protein is located near the polypeptide exit tunnel on the outside of the subunit, while an extended beta-hairpin is found that lines the wall of the exit tunnel in the center of the 70S ribosome. The sequence is that of Large ribosomal subunit protein uL22 from Geobacillus stearothermophilus (Bacillus stearothermophilus).